Reading from the N-terminus, the 524-residue chain is Cytochrome P450 monooxygenase ATR4 (524 aa).

The helical transmembrane segment at 13–36 (IITYLDSLTWVGMALPLFSLCWAI) threads the bilayer. Residues N291, N444, and N454 are each glycosylated (N-linked (GlcNAc...) asparagine).

The protein belongs to the cytochrome P450 family. The cofactor is heme.

It is found in the membrane. It functions in the pathway mycotoxin biosynthesis. Functionally, cytochrome P450 monooxygenase; part of the core atranone cluster (CAC) which products are predicted to catalyze most or all steps of mycotoxin atranone synthesis, starting from geranylgeranyl pyrophosphate (GGPP). The initial cyclization of GGPP to dolabellane is probably performed by the terpene cyclase ATR13. The Baeyer-Villiger oxidation near the end of the atranone synthesis, which converts atranones D and E to atranones F and G is predicted to be catalyzed by the monooxygenase ATR8. Of the CAC's other predicted gene products, the reducing PKS ATR6 might synthesize a polyketide chain. This polyketide is probably transferred onto the atranone backbone by the polyketide transferase ATR5. Other predicted CAC products include 4 oxygenases (ATR2, ATR3, ATR4, and ATR14), 3 short-chain reductases (ATR7, ATR9, and ATR10), and a methyltransferase (ATR12). These may all be involved in the various steps of atranone biosynthesis, although their specific roles must await experimental determination. This Stachybotrys chlorohalonatus (strain IBT 40285) protein is Cytochrome P450 monooxygenase ATR4.